Consider the following 189-residue polypeptide: Pyridoxal 5'-phosphate synthase subunit PdxT (189 aa).

Position 47–49 (47–49 (GES)) interacts with L-glutamine. Catalysis depends on C79, which acts as the Nucleophile. L-glutamine contacts are provided by residues R106 and 135 to 136 (IR). Residues H171 and E173 each act as charge relay system in the active site.

Belongs to the glutaminase PdxT/SNO family. As to quaternary structure, in the presence of PdxS, forms a dodecamer of heterodimers. Only shows activity in the heterodimer.

It catalyses the reaction aldehydo-D-ribose 5-phosphate + D-glyceraldehyde 3-phosphate + L-glutamine = pyridoxal 5'-phosphate + L-glutamate + phosphate + 3 H2O + H(+). The enzyme catalyses L-glutamine + H2O = L-glutamate + NH4(+). Its pathway is cofactor biosynthesis; pyridoxal 5'-phosphate biosynthesis. In terms of biological role, catalyzes the hydrolysis of glutamine to glutamate and ammonia as part of the biosynthesis of pyridoxal 5'-phosphate. The resulting ammonia molecule is channeled to the active site of PdxS. The polypeptide is Pyridoxal 5'-phosphate synthase subunit PdxT (Caldanaerobacter subterraneus subsp. tengcongensis (strain DSM 15242 / JCM 11007 / NBRC 100824 / MB4) (Thermoanaerobacter tengcongensis)).